Here is a 402-residue protein sequence, read N- to C-terminus: Plasminogen activator inhibitor 1 (402 aa).

An N-terminal signal peptide occupies residues 1–22 (MQMSSALACLILGLVLVSGKGF). 3 N-linked (GlcNAc...) asparagine glycosylation sites follow: Asn232, Asn288, and Asn352.

This sequence belongs to the serpin family. As to quaternary structure, forms a heterodimer with TMPRSS7. Interacts with VTN. Binds LRP1B; binding is followed by internalization and degradation. Interacts with PPP1CB. In complex with PLAU/uPA, interacts with PLAUR/uPAR. Interacts with SORL1 and LRP1, either alone or in complex with PLAU; these interactions are abolished in the presence of LRPAP1/RAP. The ternary complex composed of PLAUR-PLAU-PAI1 also interacts with SORL1. Interacts with PLAT/tPA. Also interacts with SORL1, when complexed to PLAT/tPA.

Its subcellular location is the secreted. In terms of biological role, serine protease inhibitor. Inhibits TMPRSS7. Is a primary inhibitor of tissue-type plasminogen activator (PLAT) and urokinase-type plasminogen activator (PLAU). As PLAT inhibitor, it is required for fibrinolysis down-regulation and is responsible for the controlled degradation of blood clots. As PLAU inhibitor, it is involved in the regulation of cell adhesion and spreading. Acts as a regulator of cell migration, independently of its role as protease inhibitor. It is required for stimulation of keratinocyte migration during cutaneous injury repair. Involved in cellular and replicative senescence. Plays a role in alveolar type 2 cells senescence in the lung. Is involved in the regulation of cementogenic differentiation of periodontal ligament stem cells, and regulates odontoblast differentiation and dentin formation during odontogenesis. In Mus musculus (Mouse), this protein is Plasminogen activator inhibitor 1 (Serpine1).